Consider the following 159-residue polypeptide: 2-C-methyl-D-erythritol 2,4-cyclodiphosphate synthase (159 aa).

Residues Asp8 and His10 each coordinate a divalent metal cation. 4-CDP-2-C-methyl-D-erythritol 2-phosphate-binding positions include 8 to 10 and 34 to 35; these read DSH and HS. His42 provides a ligand contact to a divalent metal cation. 4-CDP-2-C-methyl-D-erythritol 2-phosphate contacts are provided by residues 56–58, 61–65, Phe139, and Arg142; these read DIG and FPDSD.

This sequence belongs to the IspF family. Homotrimer. It depends on a divalent metal cation as a cofactor.

The catalysed reaction is 4-CDP-2-C-methyl-D-erythritol 2-phosphate = 2-C-methyl-D-erythritol 2,4-cyclic diphosphate + CMP. It functions in the pathway isoprenoid biosynthesis; isopentenyl diphosphate biosynthesis via DXP pathway; isopentenyl diphosphate from 1-deoxy-D-xylulose 5-phosphate: step 4/6. In terms of biological role, involved in the biosynthesis of isopentenyl diphosphate (IPP) and dimethylallyl diphosphate (DMAPP), two major building blocks of isoprenoid compounds. Catalyzes the conversion of 4-diphosphocytidyl-2-C-methyl-D-erythritol 2-phosphate (CDP-ME2P) to 2-C-methyl-D-erythritol 2,4-cyclodiphosphate (ME-CPP) with a corresponding release of cytidine 5-monophosphate (CMP). This chain is 2-C-methyl-D-erythritol 2,4-cyclodiphosphate synthase, found in Syntrophus aciditrophicus (strain SB).